Reading from the N-terminus, the 649-residue chain is Protein phosphatase Slingshot homolog 3 (649 aa).

The span at 1–20 (MALVTVSRSPPASGHSTPVG) shows a compositional bias: polar residues. A disordered region spans residues 1-32 (MALVTVSRSPPASGHSTPVGPTQDRVVRRRGR). An N-acetylalanine modification is found at alanine 2. Residues serine 9 and serine 38 each carry the phosphoserine modification. Residues 49–90 (LQDGGDSNVASEADSEPMEEPSGEEQPTEDQTDKGQGLQSPW) are disordered. Acidic residues predominate over residues 61–78 (ADSEPMEEPSGEEQPTED). Serine 88 bears the Phosphoserine mark. The region spanning 266-321 (EKMEQAILAELWQVLDTSDLDSVTSKEIRQALELRLGCPLQQYRDFIDNQMLLLMA) is the DEK-C domain. Positions 325–466 (RASRIFPHLY…LRTYQGILTA (142 aa)) constitute a Tyrosine-protein phosphatase domain. Cysteine 410 (phosphocysteine intermediate) is an active-site residue. Low complexity-rich tracts occupy residues 541 to 551 (LEPSESESTPE) and 608 to 627 (TRAF…GMSS). Disordered stretches follow at residues 541-586 (LEPS…KGPW) and 608-649 (TRAF…EDKA). Basic and acidic residues predominate over residues 639 to 649 (SVDDSREEDKA).

Belongs to the protein-tyrosine phosphatase family. In terms of assembly, does not bind to, or colocalize with, filamentous actin. In terms of tissue distribution, expressed in brain, small intestine and testis. Also expressed at lower levels in heart, kidney, liver, spleen and thymus.

It localises to the cytoplasm. The protein localises to the cytoskeleton. It is found in the nucleus. The enzyme catalyses O-phospho-L-tyrosyl-[protein] + H2O = L-tyrosyl-[protein] + phosphate. The catalysed reaction is O-phospho-L-seryl-[protein] + H2O = L-seryl-[protein] + phosphate. It carries out the reaction O-phospho-L-threonyl-[protein] + H2O = L-threonyl-[protein] + phosphate. Its function is as follows. Protein phosphatase which may play a role in the regulation of actin filament dynamics. Can dephosphorylate and activate the actin binding/depolymerizing factor cofilin, which subsequently binds to actin filaments and stimulates their disassembly. The chain is Protein phosphatase Slingshot homolog 3 (Ssh3) from Mus musculus (Mouse).